A 449-amino-acid polypeptide reads, in one-letter code: Glutamate--tRNA ligase (449 aa).

The 'HIGH' region motif lies at proline 10–asparagine 20. The 'KMSKS' region motif lies at lysine 214 to arginine 218. Lysine 217 is a binding site for ATP.

Belongs to the class-I aminoacyl-tRNA synthetase family. Glutamate--tRNA ligase type 1 subfamily. Monomer.

Its subcellular location is the cytoplasm. The enzyme catalyses tRNA(Glu) + L-glutamate + ATP = L-glutamyl-tRNA(Glu) + AMP + diphosphate. Functionally, catalyzes the attachment of glutamate to tRNA(Glu) in a two-step reaction: glutamate is first activated by ATP to form Glu-AMP and then transferred to the acceptor end of tRNA(Glu). The sequence is that of Glutamate--tRNA ligase from Onion yellows phytoplasma (strain OY-M).